The sequence spans 291 residues: Lipoyl synthase, organellar chromatophore (291 aa).

The [4Fe-4S] cluster site is built by cysteine 33, cysteine 38, cysteine 44, cysteine 59, cysteine 63, cysteine 66, and serine 274. The Radical SAM core domain maps to 45–263; it reads FAGGTATFLI…AIGELEMNFL (219 aa).

It belongs to the radical SAM superfamily. Lipoyl synthase family. [4Fe-4S] cluster serves as cofactor.

Its subcellular location is the plastid. The protein resides in the organellar chromatophore. The catalysed reaction is [[Fe-S] cluster scaffold protein carrying a second [4Fe-4S](2+) cluster] + N(6)-octanoyl-L-lysyl-[protein] + 2 oxidized [2Fe-2S]-[ferredoxin] + 2 S-adenosyl-L-methionine + 4 H(+) = [[Fe-S] cluster scaffold protein] + N(6)-[(R)-dihydrolipoyl]-L-lysyl-[protein] + 4 Fe(3+) + 2 hydrogen sulfide + 2 5'-deoxyadenosine + 2 L-methionine + 2 reduced [2Fe-2S]-[ferredoxin]. It participates in protein modification; protein lipoylation via endogenous pathway; protein N(6)-(lipoyl)lysine from octanoyl-[acyl-carrier-protein]: step 2/2. Catalyzes the radical-mediated insertion of two sulfur atoms into the C-6 and C-8 positions of the octanoyl moiety bound to the lipoyl domains of lipoate-dependent enzymes, thereby converting the octanoylated domains into lipoylated derivatives. This Paulinella chromatophora protein is Lipoyl synthase, organellar chromatophore.